A 155-amino-acid chain; its full sequence is SsrA-binding protein (155 aa).

The protein belongs to the SmpB family.

The protein resides in the cytoplasm. In terms of biological role, required for rescue of stalled ribosomes mediated by trans-translation. Binds to transfer-messenger RNA (tmRNA), required for stable association of tmRNA with ribosomes. tmRNA and SmpB together mimic tRNA shape, replacing the anticodon stem-loop with SmpB. tmRNA is encoded by the ssrA gene; the 2 termini fold to resemble tRNA(Ala) and it encodes a 'tag peptide', a short internal open reading frame. During trans-translation Ala-aminoacylated tmRNA acts like a tRNA, entering the A-site of stalled ribosomes, displacing the stalled mRNA. The ribosome then switches to translate the ORF on the tmRNA; the nascent peptide is terminated with the 'tag peptide' encoded by the tmRNA and targeted for degradation. The ribosome is freed to recommence translation, which seems to be the essential function of trans-translation. The protein is SsrA-binding protein of Lactococcus lactis subsp. cremoris (strain MG1363).